We begin with the raw amino-acid sequence, 274 residues long: Ommochrome-binding protein (274 aa).

Positions 1-18 (MKLLILTICALHVNQMMA) are cleaved as a signal peptide. The N-linked (GlcNAc...) asparagine glycan is linked to Asn-183.

As to quaternary structure, monomer. As to expression, present in larval hemolymph and synthesized by the fat body.

Binds to an ommochrome, ommatin D which is a yellow chromophore. May be involved in guiding the chromophore through the hemolymph from the epidermis to the gut. The chain is Ommochrome-binding protein from Manduca sexta (Tobacco hawkmoth).